The chain runs to 328 residues: DNA-directed RNA polymerase subunit alpha (328 aa).

An alpha N-terminal domain (alpha-NTD) region spans residues 1-234 (MVREKVKVST…DLFIPFLQAE (234 aa)). The tract at residues 268–328 (IALKSIFIDQ…KQIMSILEKK (61 aa)) is alpha C-terminal domain (alpha-CTD).

This sequence belongs to the RNA polymerase alpha chain family. As to quaternary structure, in plastids the minimal PEP RNA polymerase catalytic core is composed of four subunits: alpha, beta, beta', and beta''. When a (nuclear-encoded) sigma factor is associated with the core the holoenzyme is formed, which can initiate transcription.

The protein localises to the plastid. Its subcellular location is the chloroplast. The catalysed reaction is RNA(n) + a ribonucleoside 5'-triphosphate = RNA(n+1) + diphosphate. Functionally, DNA-dependent RNA polymerase catalyzes the transcription of DNA into RNA using the four ribonucleoside triphosphates as substrates. This is DNA-directed RNA polymerase subunit alpha from Citrus sinensis (Sweet orange).